The following is a 315-amino-acid chain: MNKRPLLLCLGLWVACTLSKPTEKKDRVHHDSQLSDKVHDDAQNFDYDHDAFLGAEDAKTFDQLTPEESKERLGMIVGKIDLDNDGYVTEGELTAWIKKAQKKYVYDNVERQWQEFDLSQDGLVSWDEYRNVTYGTYLDDQDPDNSFNYKQMMIRDERRFKMADKDGDLVATKEEFTAFLHPEEFDYMKDIVVLETMEDIDKNGDGLIDLEEYIGDMYNHDGDANEPEWVKTEREQFMEFRDKNHDGKMDKEETKDWILPSDYDHSEAESRHLVYESDHNQDGKLTREEIVDKYDLFVGSQATDFGEALVRHDEF.

A signal peptide spans 1-19 (MNKRPLLLCLGLWVACTLS). EF-hand domains are found at residues 68 to 103 (ESKE…AQKK), 104 to 139 (YVYD…TYLD), 151 to 186 (QMMI…EEFD), 188 to 223 (MKDI…HDGD), 229 to 264 (WVKT…SDYD), and 265 to 300 (HSEA…FVGS). 9 residues coordinate Ca(2+): Asp-81, Asp-83, Asp-85, Tyr-87, Glu-92, Asp-117, Ser-119, Asp-121, and Glu-128. Asn-131 carries N-linked (GlcNAc...) asparagine glycosylation. Ca(2+) is bound by residues Asp-164, Asp-166, Asp-168, Glu-175, Asp-201, Asn-203, Asp-205, Glu-212, Asp-242, Asn-244, Asp-246, Lys-248, Glu-253, Asp-278, Asn-280, Asp-282, Lys-284, and Glu-289. The Prevents secretion from ER signature appears at 312–315 (HDEF).

The protein belongs to the CREC family. In terms of assembly, interacts with ggcx.

It localises to the endoplasmic reticulum membrane. The protein resides in the golgi apparatus. Its subcellular location is the secreted. It is found in the melanosome. The protein localises to the sarcoplasmic reticulum lumen. In terms of biological role, involved in regulation of vitamin K-dependent carboxylation of multiple N-terminal glutamate residues. Seems to inhibit gamma-carboxylase ggcx. Binds 7 calcium ions with a low affinity. This Xenopus laevis (African clawed frog) protein is Calumenin (calu).